The primary structure comprises 158 residues: MNLTHINEEGRARMVDVSEKAETKREAVAIGSIYMKNETLRRIHEGTIKKGDVLAVAQVAGIMAAKNTSHMIPMCHPIMITGCDISFNLDFENSKIDIKAVVKTVGQTGVEMEALTAVTVAALTIYDMCKAIDRDMVISEIMLVKKSGGKSGLYEREV.

Residues methionine 74–histidine 76 and methionine 112–glutamate 113 each bind substrate. Residue aspartate 127 is part of the active site.

The protein belongs to the MoaC family. In terms of assembly, homohexamer; trimer of dimers.

It catalyses the reaction (8S)-3',8-cyclo-7,8-dihydroguanosine 5'-triphosphate = cyclic pyranopterin phosphate + diphosphate. It functions in the pathway cofactor biosynthesis; molybdopterin biosynthesis. Catalyzes the conversion of (8S)-3',8-cyclo-7,8-dihydroguanosine 5'-triphosphate to cyclic pyranopterin monophosphate (cPMP). The protein is Cyclic pyranopterin monophosphate synthase of Thermoanaerobacter pseudethanolicus (strain ATCC 33223 / 39E) (Clostridium thermohydrosulfuricum).